The primary structure comprises 360 residues: Phospho-N-acetylmuramoyl-pentapeptide-transferase (360 aa).

Helical transmembrane passes span tyrosine 21–glycine 41, threonine 73–leucine 93, isoleucine 98–tryptophan 118, tryptophan 132–glycine 152, valine 168–serine 188, glycine 199–threonine 219, alanine 236–tyrosine 256, valine 263–leucine 283, leucine 288–valine 308, and valine 338–lysine 358.

Belongs to the glycosyltransferase 4 family. MraY subfamily. Mg(2+) serves as cofactor.

Its subcellular location is the cell inner membrane. It carries out the reaction UDP-N-acetyl-alpha-D-muramoyl-L-alanyl-gamma-D-glutamyl-meso-2,6-diaminopimeloyl-D-alanyl-D-alanine + di-trans,octa-cis-undecaprenyl phosphate = di-trans,octa-cis-undecaprenyl diphospho-N-acetyl-alpha-D-muramoyl-L-alanyl-D-glutamyl-meso-2,6-diaminopimeloyl-D-alanyl-D-alanine + UMP. The protein operates within cell wall biogenesis; peptidoglycan biosynthesis. Functionally, catalyzes the initial step of the lipid cycle reactions in the biosynthesis of the cell wall peptidoglycan: transfers peptidoglycan precursor phospho-MurNAc-pentapeptide from UDP-MurNAc-pentapeptide onto the lipid carrier undecaprenyl phosphate, yielding undecaprenyl-pyrophosphoryl-MurNAc-pentapeptide, known as lipid I. This Actinobacillus pleuropneumoniae serotype 5b (strain L20) protein is Phospho-N-acetylmuramoyl-pentapeptide-transferase.